The following is a 253-amino-acid chain: 5-oxoprolinase subunit A (253 aa).

Belongs to the LamB/PxpA family. As to quaternary structure, forms a complex composed of PxpA, PxpB and PxpC.

It carries out the reaction 5-oxo-L-proline + ATP + 2 H2O = L-glutamate + ADP + phosphate + H(+). Catalyzes the cleavage of 5-oxoproline to form L-glutamate coupled to the hydrolysis of ATP to ADP and inorganic phosphate. This is 5-oxoprolinase subunit A from Bacillus cereus (strain Q1).